We begin with the raw amino-acid sequence, 41 residues long: Photosystem II reaction center protein L (41 aa).

The helical transmembrane segment at 20-40 (LFLGLLLVFVLGILSPATSLT) threads the bilayer.

It belongs to the PsbL family. PSII is composed of 1 copy each of membrane proteins PsbA, PsbB, PsbC, PsbD, PsbE, PsbF, PsbH, PsbI, PsbJ, PsbK, PsbL, PsbM, PsbT, PsbX, PsbY, PsbZ, Psb30/Ycf12, peripheral proteins PsbO, CyanoQ (PsbQ), PsbU, PsbV and a large number of cofactors. It forms dimeric complexes.

It is found in the cellular thylakoid membrane. In terms of biological role, one of the components of the core complex of photosystem II (PSII). PSII is a light-driven water:plastoquinone oxidoreductase that uses light energy to abstract electrons from H(2)O, generating O(2) and a proton gradient subsequently used for ATP formation. It consists of a core antenna complex that captures photons, and an electron transfer chain that converts photonic excitation into a charge separation. This subunit is found at the monomer-monomer interface and is required for correct PSII assembly and/or dimerization. This is Photosystem II reaction center protein L from Synechococcus sp. (strain ATCC 27144 / PCC 6301 / SAUG 1402/1) (Anacystis nidulans).